The following is a 384-amino-acid chain: 8-amino-7-oxononanoate synthase (384 aa).

Residue arginine 21 participates in substrate binding. A pyridoxal 5'-phosphate-binding site is contributed by 108–109; sequence GF. Histidine 133 contributes to the substrate binding site. Residues serine 179, histidine 207, and threonine 233 each contribute to the pyridoxal 5'-phosphate site. Lysine 236 carries the N6-(pyridoxal phosphate)lysine modification. Threonine 352 provides a ligand contact to substrate.

The protein belongs to the class-II pyridoxal-phosphate-dependent aminotransferase family. BioF subfamily. Homodimer. Pyridoxal 5'-phosphate is required as a cofactor.

The enzyme catalyses 6-carboxyhexanoyl-[ACP] + L-alanine + H(+) = (8S)-8-amino-7-oxononanoate + holo-[ACP] + CO2. It participates in cofactor biosynthesis; biotin biosynthesis. Catalyzes the decarboxylative condensation of pimeloyl-[acyl-carrier protein] and L-alanine to produce 8-amino-7-oxononanoate (AON), [acyl-carrier protein], and carbon dioxide. This Escherichia coli (strain SE11) protein is 8-amino-7-oxononanoate synthase.